We begin with the raw amino-acid sequence, 108 residues long: Flagellar hook-basal body complex protein FliE (108 aa).

It belongs to the FliE family.

Its subcellular location is the bacterial flagellum basal body. This is Flagellar hook-basal body complex protein FliE from Pseudomonas fluorescens (strain ATCC BAA-477 / NRRL B-23932 / Pf-5).